The primary structure comprises 313 residues: HTH-type transcriptional regulator CysB (313 aa).

Residues 1–59 (MNLHQFRFVREAVRQNFNLTEAAKALYTSQPGVSKAIIELEDELGVEIFTRHGKRVRSL) form the HTH lysR-type domain. The segment at residues 19–38 (LTEAAKALYTSQPGVSKAII) is a DNA-binding region (H-T-H motif).

Belongs to the LysR transcriptional regulatory family.

Transcriptional regulator preferentially involved in the control of sulfate transport and reduction. Binds to DNA at target promoter regions. The protein is HTH-type transcriptional regulator CysB of Burkholderia cenocepacia (strain ATCC BAA-245 / DSM 16553 / LMG 16656 / NCTC 13227 / J2315 / CF5610) (Burkholderia cepacia (strain J2315)).